We begin with the raw amino-acid sequence, 463 residues long: L-seryl-tRNA(Sec) selenium transferase (463 aa).

K295 is subject to N6-(pyridoxal phosphate)lysine.

This sequence belongs to the SelA family. In terms of assembly, homodecamer; pentamer of dimers. Binds only one seryl-tRNA(Sec) per dimer. Pyridoxal 5'-phosphate serves as cofactor.

The protein localises to the cytoplasm. It carries out the reaction L-seryl-tRNA(Sec) + selenophosphate + H(+) = L-selenocysteinyl-tRNA(Sec) + phosphate. Its pathway is aminoacyl-tRNA biosynthesis; selenocysteinyl-tRNA(Sec) biosynthesis; selenocysteinyl-tRNA(Sec) from L-seryl-tRNA(Sec) (bacterial route): step 1/1. Converts seryl-tRNA(Sec) to selenocysteinyl-tRNA(Sec) required for selenoprotein biosynthesis. The sequence is that of L-seryl-tRNA(Sec) selenium transferase from Shigella boydii serotype 4 (strain Sb227).